A 307-amino-acid polypeptide reads, in one-letter code: Aquaporin Lacbi1:387054 (307 aa).

At 1 to 40 (MSNAPLVHLSDLQKRLRVFAVWEKVRNDGKVHWAIECFAE) the chain is on the cytoplasmic side. Residues 41 to 61 (MFGVFLYVYFGLGSTAGWVIG) traverse the membrane as a helical segment. Residues 62–68 (NIIKETN) are Extracellular-facing. Residues 69–89 (LSSILQIGLAYAFGIWFAIGL) form a helical membrane-spanning segment. At 90–120 (CSSSSGGHFNPCVTLSFVVFKGFPKLKACRY) the chain is on the cytoplasmic side. Positions 99–101 (NPC) match the NPA 1 motif. The chain crosses the membrane as a helical span at residues 121–141 (IIAQILGAYIASALVYSQWNV). The Extracellular portion of the chain corresponds to 142-157 (LIEECTLGLIKAKAYD). A helical membrane pass occupies residues 158-178 (TTMFTPNGPAGIFALYLVPGA). The NPA 2 signature appears at 167-169 (AGI). Residues 179 to 183 (QSVPR) lie on the Cytoplasmic side of the membrane. A helical transmembrane segment spans residues 184 to 203 (ALLNEFVNSTLIGMIIWAAL). The Extracellular portion of the chain corresponds to 204-216 (DPTNMMVPPAMGP). Residues 217 to 237 (LFISLAYAAVIWGFATPAVAL) form a helical membrane-spanning segment. Residues 238–264 (NTARDLGARLFAMSIWGTKAAGSGYSA) lie on the Cytoplasmic side of the membrane. The chain crosses the membrane as a helical span at residues 265-285 (IACLINIPATLLGVFLYEVFF). Over 286-307 (TDSDRGKLLPILNGKKLKHIFS) the chain is Extracellular.

Belongs to the MIP/aquaporin (TC 1.A.8) family.

The protein localises to the membrane. It catalyses the reaction H2O(in) = H2O(out). It carries out the reaction NH4(+)(in) = NH4(+)(out). The enzyme catalyses urea(in) = urea(out). The catalysed reaction is glycerol(in) = glycerol(out). Functionally, water channel required to facilitate the transport of water across membranes. In addition to water, also shows strong ammonium transport activity. Also enables low but statistically significant glycerol and urea permeability. May be involved in fungal nitrogen (ammonium) support of the plant host in symbiosis. The protein is Aquaporin Lacbi1:387054 of Laccaria bicolor (strain S238N-H82 / ATCC MYA-4686) (Bicoloured deceiver).